A 152-amino-acid chain; its full sequence is Transcriptional regulator MraZ (152 aa).

SpoVT-AbrB domains follow at residues 5–52 and 81–124; these read ATMV…PLPE and ASEC…DEQT.

Belongs to the MraZ family. Forms oligomers.

The protein localises to the cytoplasm. It localises to the nucleoid. Functionally, negatively regulates its own expression and that of the subsequent genes in the proximal part of the division and cell wall (dcw) gene cluster. Acts by binding directly to DNA. May also regulate the expression of genes outside the dcw cluster. This chain is Transcriptional regulator MraZ, found in Serratia proteamaculans (strain 568).